The chain runs to 242 residues: Lysosomal membrane ascorbate-dependent ferrireductase CYB561A3 (242 aa).

The Cytoplasmic segment spans residues 1 to 7; that stretch reads MVSGRFY. A helical membrane pass occupies residues 8–28; the sequence is LSCLLLGSLGSMCILFTIYWM. Positions 12–219 constitute a Cytochrome b561 domain; it reads LLGSLGSMCI…FGLLVLYILL (208 aa). The Lumenal segment spans residues 29–45; sequence QYWRGGFAWNGSIYMFN. The N-linked (GlcNAc...) asparagine glycan is linked to asparagine 38. A helical transmembrane segment spans residues 46-66; sequence WHPVLMVAGMVVFYGGASLVY. Residues histidine 47 and arginine 67 each contribute to the heme b site. The Cytoplasmic segment spans residues 67–83; that stretch reads RLPQSWVGPKLPWKLLH. Lysine 76 and lysine 80 together coordinate L-ascorbate. Position 83 (histidine 83) interacts with heme b. A helical membrane pass occupies residues 84–104; sequence AALHLMAFVLTVVGLVAVFTF. The Lumenal segment spans residues 105-119; sequence HNHGRTANLYSLHSW. Heme b contacts are provided by residues 112–115 and histidine 117; that span reads NLYS. A helical transmembrane segment spans residues 120–140; the sequence is LGITTVFLFACQWFLGFAVFL. The Cytoplasmic segment spans residues 141-154; that stretch reads LPWASMWLRSLLKP. Residue arginine 149 coordinates L-ascorbate. Residues 155–175 form a helical membrane-spanning segment; the sequence is IHVFFGAAILSLSIASVISGI. Heme b is bound by residues histidine 156 and glutamate 177. Residues 176–202 lie on the Lumenal side of the membrane; the sequence is NEKLFFSLKNTTRPYHSLPSEAVFANS. Residues 203-223 traverse the membrane as a helical segment; that stretch reads TGMLVVAFGLLVLYILLASSW. Lysine 224 is a binding site for heme b. The Cytoplasmic portion of the chain corresponds to 224-242; that stretch reads KRPEPGILTDRQPLLHDGE.

As to quaternary structure, homodimer. The cofactor is heme b. N-glycosylated.

The protein localises to the late endosome membrane. The protein resides in the lysosome membrane. The enzyme catalyses Fe(3+)(out) + L-ascorbate(in) = monodehydro-L-ascorbate radical(in) + Fe(2+)(out) + H(+). Functionally, transmembrane reductase that uses ascorbate as an electron donor in the cytoplasm and transfers electrons across membranes to reduce iron cations Fe(3+) into Fe(2+) in the lumen of the late endosome and lysosome. Reduced iron can then be extruded from the late endosome and lysosome to the cytoplasm by divalent metal-specific transporters. It is therefore most probably involved in endosomal and lysosomal cellular iron homeostasis. The sequence is that of Lysosomal membrane ascorbate-dependent ferrireductase CYB561A3 from Homo sapiens (Human).